The following is a 377-amino-acid chain: Putative glutamate--cysteine ligase 2 (377 aa).

It belongs to the glutamate--cysteine ligase type 2 family. YbdK subfamily.

The catalysed reaction is L-cysteine + L-glutamate + ATP = gamma-L-glutamyl-L-cysteine + ADP + phosphate + H(+). In terms of biological role, ATP-dependent carboxylate-amine ligase which exhibits weak glutamate--cysteine ligase activity. The chain is Putative glutamate--cysteine ligase 2 from Pseudomonas aeruginosa (strain LESB58).